Consider the following 329-residue polypeptide: Large ribosomal subunit protein uL3 (329 aa).

This sequence belongs to the universal ribosomal protein uL3 family. In terms of assembly, part of the 50S ribosomal subunit. Forms a cluster with proteins L14 and L24e.

Its function is as follows. One of the primary rRNA binding proteins, it binds directly near the 3'-end of the 23S rRNA, where it nucleates assembly of the 50S subunit. The chain is Large ribosomal subunit protein uL3 from Picrophilus torridus (strain ATCC 700027 / DSM 9790 / JCM 10055 / NBRC 100828 / KAW 2/3).